The chain runs to 229 residues: Ribonuclease 3 (229 aa).

In terms of domain architecture, RNase III spans 3–125 (VNALQEKLGY…LIGGIFLDSN (123 aa)). Residue E38 participates in Mg(2+) binding. The active site involves D42. Mg(2+) contacts are provided by N111 and E114. Residue E114 is part of the active site. In terms of domain architecture, DRBM spans 155–225 (DPKTRLQEYM…AAKVLEALEH (71 aa)).

This sequence belongs to the ribonuclease III family. Homodimer. Requires Mg(2+) as cofactor.

It localises to the cytoplasm. It carries out the reaction Endonucleolytic cleavage to 5'-phosphomonoester.. Its function is as follows. Digests double-stranded RNA. Involved in the processing of primary rRNA transcript to yield the immediate precursors to the large and small rRNAs (23S and 16S). Processes some mRNAs, and tRNAs when they are encoded in the rRNA operon. Processes pre-crRNA and tracrRNA of type II CRISPR loci if present in the organism. The protein is Ribonuclease 3 of Blochmanniella pennsylvanica (strain BPEN).